Here is a 346-residue protein sequence, read N- to C-terminus: Isopentenyl-diphosphate delta-isomerase (346 aa).

9–10 (RK) is a substrate binding site. FMN is bound by residues serine 67, 68–70 (SMT), serine 98, and asparagine 127. Residue 98–100 (SQR) participates in substrate binding. Glutamine 162 serves as a coordination point for substrate. A Mg(2+)-binding site is contributed by glutamate 163. Residues lysine 194, threonine 224, 274–276 (GIR), and 295–296 (AA) each bind FMN.

Belongs to the IPP isomerase type 2 family. Homooctamer. Dimer of tetramers. It depends on FMN as a cofactor. The cofactor is NADPH. Requires Mg(2+) as cofactor.

It is found in the cytoplasm. It carries out the reaction isopentenyl diphosphate = dimethylallyl diphosphate. Functionally, involved in the biosynthesis of isoprenoids. Catalyzes the 1,3-allylic rearrangement of the homoallylic substrate isopentenyl (IPP) to its allylic isomer, dimethylallyl diphosphate (DMAPP). The sequence is that of Isopentenyl-diphosphate delta-isomerase from Stutzerimonas stutzeri (strain A1501) (Pseudomonas stutzeri).